The sequence spans 203 residues: Ribosome maturation factor RimP (203 aa).

Positions 1-21 (MSDSEATTSTDRSESNSTATI) are enriched in polar residues. The tract at residues 1–23 (MSDSEATTSTDRSESNSTATIHN) is disordered.

Belongs to the RimP family.

The protein resides in the cytoplasm. Functionally, required for maturation of 30S ribosomal subunits. The protein is Ribosome maturation factor RimP of Paenarthrobacter aurescens (strain TC1).